The chain runs to 209 residues: Large ribosomal subunit protein uL3 (209 aa).

The protein belongs to the universal ribosomal protein uL3 family. As to quaternary structure, part of the 50S ribosomal subunit. Forms a cluster with proteins L14 and L19.

Its function is as follows. One of the primary rRNA binding proteins, it binds directly near the 3'-end of the 23S rRNA, where it nucleates assembly of the 50S subunit. This chain is Large ribosomal subunit protein uL3, found in Desulfotalea psychrophila (strain LSv54 / DSM 12343).